Here is a 582-residue protein sequence, read N- to C-terminus: ATP-dependent lipid A-core flippase (582 aa).

Transmembrane regions (helical) follow at residues 27 to 47 (LIVAVIALVINAISDTYMISL), 69 to 89 (LIIFVMMFIRGTSGFVSTYCL), 142 to 162 (ALVSIVREGASIIGLLVLMFY), 165 to 185 (WQLSLVLFAVAPVVAWGIGVV), and 249 to 269 (AAANPIIQMIASFAIVAVLYL). The ABC transmembrane type-1 domain maps to 28–310 (IVAVIALVIN…LTNVTSQFQR (283 aa)). An ABC transporter domain is found at 342-578 (VSVKDVSFTY…NGAYAQLHRI (237 aa)). 376–383 (GRSGSGKS) contacts ATP.

This sequence belongs to the ABC transporter superfamily. Lipid exporter (TC 3.A.1.106) family. In terms of assembly, homodimer.

Its subcellular location is the cell inner membrane. It catalyses the reaction ATP + H2O + lipid A-core oligosaccharideSide 1 = ADP + phosphate + lipid A-core oligosaccharideSide 2.. Functionally, involved in lipopolysaccharide (LPS) biosynthesis. Translocates lipid A-core from the inner to the outer leaflet of the inner membrane. Transmembrane domains (TMD) form a pore in the inner membrane and the ATP-binding domain (NBD) is responsible for energy generation. This Vibrio parahaemolyticus serotype O3:K6 (strain RIMD 2210633) protein is ATP-dependent lipid A-core flippase.